The sequence spans 481 residues: Metalloprotease TldD (481 aa).

The protein belongs to the peptidase U62 family.

Its function is as follows. Metalloprotease involved in CcdA degradation. Suppresses the inhibitory activity of the carbon storage regulator (CsrA). The sequence is that of Metalloprotease TldD (tldD) from Escherichia coli (strain K12).